The primary structure comprises 79 residues: Probable [Fe-S]-dependent transcriptional repressor (79 aa).

The iron-sulfur cluster site is built by C56, C61, C64, and C70.

The protein belongs to the FeoC family.

Functionally, may function as a transcriptional regulator that controls feoABC expression. This is Probable [Fe-S]-dependent transcriptional repressor from Serratia proteamaculans (strain 568).